The sequence spans 268 residues: Ubiquinone/menaquinone biosynthesis C-methyltransferase UbiE (268 aa).

Residues 1 to 23 (MTDQHAFATEQVQLDPTLSPTTE) form a disordered region. Over residues 10-23 (EQVQLDPTLSPTTE) the composition is skewed to polar residues. S-adenosyl-L-methionine is bound by residues Thr-91, Asp-112, 140-141 (NA), and Ser-157.

This sequence belongs to the class I-like SAM-binding methyltransferase superfamily. MenG/UbiE family.

It carries out the reaction a 2-demethylmenaquinol + S-adenosyl-L-methionine = a menaquinol + S-adenosyl-L-homocysteine + H(+). It catalyses the reaction a 2-methoxy-6-(all-trans-polyprenyl)benzene-1,4-diol + S-adenosyl-L-methionine = a 5-methoxy-2-methyl-3-(all-trans-polyprenyl)benzene-1,4-diol + S-adenosyl-L-homocysteine + H(+). The protein operates within quinol/quinone metabolism; menaquinone biosynthesis; menaquinol from 1,4-dihydroxy-2-naphthoate: step 2/2. It functions in the pathway cofactor biosynthesis; ubiquinone biosynthesis. Its function is as follows. Methyltransferase required for the conversion of demethylmenaquinol (DMKH2) to menaquinol (MKH2) and the conversion of 2-polyprenyl-6-methoxy-1,4-benzoquinol (DDMQH2) to 2-polyprenyl-3-methyl-6-methoxy-1,4-benzoquinol (DMQH2). In Pasteurella multocida (strain Pm70), this protein is Ubiquinone/menaquinone biosynthesis C-methyltransferase UbiE.